Here is an 814-residue protein sequence, read N- to C-terminus: Ubiquitin carboxyl-terminal hydrolase 45 (814 aa).

Over residues 1–14 (MRVKDPTKALPEKA) the composition is skewed to basic and acidic residues. The segment at 1-28 (MRVKDPTKALPEKAKRSKRPTVPHDEDS) is disordered. Positions 1–62 (MRVKDPTKAL…AIAENLWSVC (62 aa)) are interaction with ERCC1. Residues S28 and S29 each carry the phosphoserine modification. Residues 36–153 (LTCQHVSHAI…AQIVDFLQKH (118 aa)) form a UBP-type zinc finger. Zn(2+) contacts are provided by C38, H40, C62, C65, C85, C88, C93, H101, H105, H114, C127, and C130. The USP domain maps to 190 to 813 (RGITNLGNTC…QAYLLFYERV (624 aa)). Residue C199 is the Nucleophile of the active site. 2 disordered regions span residues 418 to 443 (IENI…IHDR) and 479 to 533 (ESRL…PDGP). Over residues 432 to 443 (SSKDKSQLIHDR) the composition is skewed to basic and acidic residues. 2 positions are modified to phosphoserine: S508 and S526. Positions 515-527 (KQTGLFRSSSGSG) are enriched in polar residues. H746 functions as the Proton acceptor in the catalytic mechanism.

This sequence belongs to the peptidase C19 family. As to quaternary structure, interacts with ERCC1. The catalytically active form interacts with SPDL1. As to expression, widely expressed. High expression is detected in the cerebellum. In the eye, it is expressed at high levels in the optic nerve, sclera and retina, with relatively low levels in the choroid, lens and retinal pigment epithelium.

The protein localises to the photoreceptor inner segment. It is found in the cytoplasm. It localises to the nucleus. It catalyses the reaction Thiol-dependent hydrolysis of ester, thioester, amide, peptide and isopeptide bonds formed by the C-terminal Gly of ubiquitin (a 76-residue protein attached to proteins as an intracellular targeting signal).. Catalyzes the deubiquitination of SPDL1. Plays a role in the repair of UV-induced DNA damage via deubiquitination of ERCC1, promoting its recruitment to DNA damage sites. May be involved in the maintenance of photoreceptor function. May play a role in normal retinal development. Plays a role in cell migration. This is Ubiquitin carboxyl-terminal hydrolase 45 (USP45) from Homo sapiens (Human).